A 237-amino-acid polypeptide reads, in one-letter code: HTH-type transcriptional regulator GmuR (237 aa).

An HTH gntR-type domain is found at 1–69 (MNKYEIIANE…RGHGTFIIQS (69 aa)). Positions 29–48 (EVSLAKEFNSSRMTMKRALD) form a DNA-binding region, H-T-H motif.

It localises to the cytoplasm. In terms of biological role, transcriptional repressor of the gmuBACDREFG operon which is involved in the uptake and degradation of glucomannan. This chain is HTH-type transcriptional regulator GmuR (gmuR), found in Bacillus subtilis (strain 168).